Here is a 360-residue protein sequence, read N- to C-terminus: Codeine O-demethylase (360 aa).

The 101-residue stretch at 211–311 folds into the Fe2OG dioxygenase domain; that stretch reads GLQTMRMNYY…RLSIATFHDS (101 aa). Y220 contacts 2-oxoglutarate. H235, D237, and H292 together coordinate Fe cation. 2-oxoglutarate is bound by residues R302 and S304.

It belongs to the iron/ascorbate-dependent oxidoreductase family. L-ascorbate is required as a cofactor. Requires Fe cation as cofactor. As to expression, mainly expressed in stems, capsules and leaves and, to a lower extent, in roots.

The catalysed reaction is codeine + 2-oxoglutarate + O2 = morphine + formaldehyde + succinate + CO2. The enzyme catalyses thebaine + 2-oxoglutarate + O2 = oripavine + formaldehyde + succinate + CO2. It catalyses the reaction (S)-scoulerine + 2-oxoglutarate + O2 = (S)-3-O-demethylscoulerine + formaldehyde + succinate + CO2. It carries out the reaction thebaine + 2-oxoglutarate + O2 = neopinone + formaldehyde + succinate + CO2. The catalysed reaction is (S)-reticuline + 2-oxoglutarate + O2 = (S)-6-O-demethylreticuline + formaldehyde + succinate + CO2. The enzyme catalyses (S)-tetrahydropalmatine + S-adenosyl-L-methionine = (S)-cis-N-methyltetrahydropalmatine + S-adenosyl-L-homocysteine. It participates in alkaloid biosynthesis; morphine biosynthesis. Moderate substrate inhibition. Not inhibited in vitro by acylcyclohexanediones. Functionally, non-heme dioxygenase involved in biosynthesis of morphinan-type benzylisoquinoline and opiate alkaloids natural products. Mediates the conversion of codeine to morphine. Also catalyzes, with lower efficiency, the 3-O-demethylation of thebaine to oripavine and of (S)-scoulerine to 3-O-demethylscoulerine. Supports, with a lower turnover, the conversion of codeinone to morphinone, of thebaine to neopinone, and of neopine to neomorphine. Supports dealkylation reactions such as O,O-demethylenation in the metabolism of protopine, benzo[c]phenanthridine, and rhoeadine alkaloids; cleaves a methylenedioxy bridge leaving two hydroxyl groups. Catalyzes the O,O-demethylenation of methylenedioxy bridges on protopine alkaloids such as allocryptopine, cryptopine and protopine. No activity with (S)-reticuline, salutaridine, papaverine, (S)-corytuberine, oripavine, pavine or noscapine. The protein is Codeine O-demethylase of Papaver somniferum (Opium poppy).